The chain runs to 435 residues: Methylenetetrahydrofolate--tRNA-(uracil-5-)-methyltransferase TrmFO (435 aa).

9–14 (GAGLAG) lines the FAD pocket.

This sequence belongs to the MnmG family. TrmFO subfamily. The cofactor is FAD.

The protein resides in the cytoplasm. It carries out the reaction uridine(54) in tRNA + (6R)-5,10-methylene-5,6,7,8-tetrahydrofolate + NADH + H(+) = 5-methyluridine(54) in tRNA + (6S)-5,6,7,8-tetrahydrofolate + NAD(+). It catalyses the reaction uridine(54) in tRNA + (6R)-5,10-methylene-5,6,7,8-tetrahydrofolate + NADPH + H(+) = 5-methyluridine(54) in tRNA + (6S)-5,6,7,8-tetrahydrofolate + NADP(+). In terms of biological role, catalyzes the folate-dependent formation of 5-methyl-uridine at position 54 (M-5-U54) in all tRNAs. The polypeptide is Methylenetetrahydrofolate--tRNA-(uracil-5-)-methyltransferase TrmFO (Staphylococcus haemolyticus (strain JCSC1435)).